The following is a 210-amino-acid chain: Transposable element activator uncharacterized 23 kDa protein (210 aa).

The span at 67 to 78 shows a compositional bias: basic and acidic residues; that stretch reads SGRMGGPRRDGR. Residues 67 to 87 form a disordered region; that stretch reads SGRMGGPRRDGRVASSGVEGG.

In Zea mays (Maize), this protein is Transposable element activator uncharacterized 23 kDa protein.